The chain runs to 301 residues: J domain-containing protein 1 (301 aa).

The J domain maps to 58 to 150 (TPYDIFGIPK…KKKIVYDTTR (93 aa)). Residues 208–228 (WTVIGIICGLAICIEGTALLA) form a helical membrane-spanning segment.

It belongs to the DnaJ family.

It is found in the mitochondrion membrane. Probable chaperone. This Saccharomyces cerevisiae (strain ATCC 204508 / S288c) (Baker's yeast) protein is J domain-containing protein 1 (JID1).